The sequence spans 428 residues: Enolase (428 aa).

Position 162 (Q162) interacts with (2R)-2-phosphoglycerate. E204 serves as the catalytic Proton donor. The Mg(2+) site is built by D241, E283, and D310. Residues K335, R364, S365, and K386 each coordinate (2R)-2-phosphoglycerate. Catalysis depends on K335, which acts as the Proton acceptor.

This sequence belongs to the enolase family. Mg(2+) is required as a cofactor.

Its subcellular location is the cytoplasm. The protein localises to the secreted. The protein resides in the cell surface. The catalysed reaction is (2R)-2-phosphoglycerate = phosphoenolpyruvate + H2O. The protein operates within carbohydrate degradation; glycolysis; pyruvate from D-glyceraldehyde 3-phosphate: step 4/5. In terms of biological role, catalyzes the reversible conversion of 2-phosphoglycerate (2-PG) into phosphoenolpyruvate (PEP). It is essential for the degradation of carbohydrates via glycolysis. This Rhodococcus erythropolis (strain PR4 / NBRC 100887) protein is Enolase.